Here is a 222-residue protein sequence, read N- to C-terminus: Deoxyribose-phosphate aldolase (222 aa).

The active-site Proton donor/acceptor is the Asp90. The Schiff-base intermediate with acetaldehyde role is filled by Lys152. Lys181 serves as the catalytic Proton donor/acceptor.

The protein belongs to the DeoC/FbaB aldolase family. DeoC type 1 subfamily.

It localises to the cytoplasm. The catalysed reaction is 2-deoxy-D-ribose 5-phosphate = D-glyceraldehyde 3-phosphate + acetaldehyde. Its pathway is carbohydrate degradation; 2-deoxy-D-ribose 1-phosphate degradation; D-glyceraldehyde 3-phosphate and acetaldehyde from 2-deoxy-alpha-D-ribose 1-phosphate: step 2/2. Catalyzes a reversible aldol reaction between acetaldehyde and D-glyceraldehyde 3-phosphate to generate 2-deoxy-D-ribose 5-phosphate. This Pectobacterium atrosepticum (strain SCRI 1043 / ATCC BAA-672) (Erwinia carotovora subsp. atroseptica) protein is Deoxyribose-phosphate aldolase.